The following is a 375-amino-acid chain: 23S rRNA (uracil(747)-C(5))-methyltransferase RlmC (375 aa).

[4Fe-4S] cluster is bound by residues Cys3, Cys11, Cys14, and Cys87. Residues Gln212, Phe241, Glu262, and Asn307 each contribute to the S-adenosyl-L-methionine site. Cys334 functions as the Nucleophile in the catalytic mechanism.

The protein belongs to the class I-like SAM-binding methyltransferase superfamily. RNA M5U methyltransferase family. RlmC subfamily.

It carries out the reaction uridine(747) in 23S rRNA + S-adenosyl-L-methionine = 5-methyluridine(747) in 23S rRNA + S-adenosyl-L-homocysteine + H(+). In terms of biological role, catalyzes the formation of 5-methyl-uridine at position 747 (m5U747) in 23S rRNA. In Xenorhabdus nematophila (strain ATCC 19061 / DSM 3370 / CCUG 14189 / LMG 1036 / NCIMB 9965 / AN6), this protein is 23S rRNA (uracil(747)-C(5))-methyltransferase RlmC.